A 303-amino-acid chain; its full sequence is Archaeosortase A (303 aa).

7 consecutive transmembrane segments (helical) span residues 3–23 (GLLSDILAWVVIGTFVAGAVA), 36–56 (TAAWVLFALFWLQLIPHFTLV), 60–80 (YIEGLLTIAAVPASLYAGWLL), 93–113 (AVAAMGVVYLPFETIPAFTLL), 169–189 (VVLACTGLGSIAIFAGLIAAV), 200–220 (LAIAVPIIYALNLLRTTFIAI), and 259–279 (LAVVALVGVTYLVVHEVPELL). Cys-173 (acyl-thioester intermediate) is an active-site residue. The active-site Proton donor is the Arg-214.

It belongs to the exosortase/archaeosortase family. Archaeosortase A subfamily.

The protein resides in the cell membrane. Functionally, transpeptidase that recognizes and modifies its substrate by proteolytic cleavage of a sorting signal. Following cleavage, a covalent intermediate is formed via a thioester bond between the archaeosortase and its substrate, which is then transferred and covalently attached to the cell membrane. This sortase recognizes a tripartite structure consisting of a conserved Pro-Gly-Phe (PGF) motif, followed by a transmembrane alpha helix domain and a cluster of basic residues, usually at the C-terminus of target proteins. Confirmed substrates include the cell surface S-layer glycoprotein Csg and HVO_0405. ArtA is required for the C-terminal processing of Csg and for its lipidation and attachment to the archaeal plasma membrane. It is also required for the processing of HVO_0405, which contains an atypical central tripartite structure. The polypeptide is Archaeosortase A (Haloferax volcanii (strain ATCC 29605 / DSM 3757 / JCM 8879 / NBRC 14742 / NCIMB 2012 / VKM B-1768 / DS2) (Halobacterium volcanii)).